The chain runs to 204 residues: Ribosomal RNA small subunit methyltransferase G (204 aa).

S-adenosyl-L-methionine is bound by residues G73, F78, and R139.

This sequence belongs to the methyltransferase superfamily. RNA methyltransferase RsmG family.

The protein localises to the cytoplasm. It catalyses the reaction guanosine(527) in 16S rRNA + S-adenosyl-L-methionine = N(7)-methylguanosine(527) in 16S rRNA + S-adenosyl-L-homocysteine. Functionally, specifically methylates the N7 position of guanine in position 527 of 16S rRNA. The polypeptide is Ribosomal RNA small subunit methyltransferase G (Coxiella burnetii (strain RSA 331 / Henzerling II)).